A 258-amino-acid polypeptide reads, in one-letter code: Deoxyribose-phosphate aldolase (258 aa).

The active-site Proton donor/acceptor is the aspartate 101. Residue lysine 166 is the Schiff-base intermediate with acetaldehyde of the active site. The Proton donor/acceptor role is filled by lysine 200.

This sequence belongs to the DeoC/FbaB aldolase family. DeoC type 2 subfamily.

It is found in the cytoplasm. The catalysed reaction is 2-deoxy-D-ribose 5-phosphate = D-glyceraldehyde 3-phosphate + acetaldehyde. Its pathway is carbohydrate degradation; 2-deoxy-D-ribose 1-phosphate degradation; D-glyceraldehyde 3-phosphate and acetaldehyde from 2-deoxy-alpha-D-ribose 1-phosphate: step 2/2. Catalyzes a reversible aldol reaction between acetaldehyde and D-glyceraldehyde 3-phosphate to generate 2-deoxy-D-ribose 5-phosphate. The polypeptide is Deoxyribose-phosphate aldolase (Actinobacillus pleuropneumoniae serotype 3 (strain JL03)).